A 447-amino-acid chain; its full sequence is Phosphoglucosamine mutase (447 aa).

Serine 103 (phosphoserine intermediate) is an active-site residue. Residues serine 103, aspartate 242, aspartate 244, and aspartate 246 each coordinate Mg(2+). Phosphoserine is present on serine 103.

Belongs to the phosphohexose mutase family. Requires Mg(2+) as cofactor. Post-translationally, activated by phosphorylation.

The catalysed reaction is alpha-D-glucosamine 1-phosphate = D-glucosamine 6-phosphate. Catalyzes the conversion of glucosamine-6-phosphate to glucosamine-1-phosphate. This Cereibacter sphaeroides (strain ATCC 17025 / ATH 2.4.3) (Rhodobacter sphaeroides) protein is Phosphoglucosamine mutase.